The sequence spans 200 residues: MSEALTELASYLGEARGNLIAASQMKYGELTLTTTGENLIALLTFLRDDAKCGFVNLIDICGVDWPQRELRFDVVYHLLSPKQNVRIRVKVATDEDTPVPSACAVHPGADWFERETWDMYGVLFTGHPDLRRILTDYGFEGHPLRKDFPTTGFVEVRYDDAAKRVVYEPVELKQEFRNFDFMSPWEGTDYVLPGDEKAKQ.

The protein belongs to the complex I 30 kDa subunit family. NDH-1 is composed of 14 different subunits. Subunits NuoB, C, D, E, F, and G constitute the peripheral sector of the complex.

It localises to the cell inner membrane. It catalyses the reaction a quinone + NADH + 5 H(+)(in) = a quinol + NAD(+) + 4 H(+)(out). In terms of biological role, NDH-1 shuttles electrons from NADH, via FMN and iron-sulfur (Fe-S) centers, to quinones in the respiratory chain. The immediate electron acceptor for the enzyme in this species is believed to be ubiquinone. Couples the redox reaction to proton translocation (for every two electrons transferred, four hydrogen ions are translocated across the cytoplasmic membrane), and thus conserves the redox energy in a proton gradient. The sequence is that of NADH-quinone oxidoreductase subunit C from Rhizobium leguminosarum bv. trifolii (strain WSM2304).